Here is a 452-residue protein sequence, read N- to C-terminus: MAGYLRVVRSLCRASGSRPAWAPAALTAPTSQEQPRRHYADKRIKVAKPVVEMDGDEMTRIIWQFIKEKLILPHVDIQLKYFDLGLPNRDQTDDQVTIDSALATQKYSVAVKCATITPDEARVEEFKLKKMWKSPNGTIRNILGGTVFREPIICKNIPRLVPGWTKPITIGRHAHGDQYKATDFVADRAGTFKMVFTPKDGSGVKEWEVYNFPAGGVGMGMYNTDESISGFAHSCFQYAIQKKWPLYMSTKNTILKAYDGRFKDIFQEIFDKHYKTDFDKNKIWYEHRLIDDMVAQVLKSSGGFVWACKNYDGDVQSDILAQGFGSLGLMTSVLVCPDGKTIEAEAAHGTVTRHYREHQKGRPTSTNPIASIFAWTRGLEHRGKLDGNQDLIRFAQMLEKVCVETVESGAMTKDLAGCIHGLSNVKLNEHFLNTTDFLDTIKSNLDRALGRQ.

The transit peptide at 1–39 directs the protein to the mitochondrion; that stretch reads MAGYLRVVRSLCRASGSRPAWAPAALTAPTSQEQPRRHY. An N6-acetyllysine mark is found at Lys-45, Lys-48, Lys-67, and Lys-69. N6-acetyllysine; alternate is present on residues Lys-80 and Lys-106. Lys-80 and Lys-106 each carry N6-succinyllysine; alternate. Residues 115-117 and Arg-122 contribute to the NADP(+) site; that span reads TIT. Thr-117 contacts D-threo-isocitrate. D-threo-isocitrate is bound by residues 134-140 and Arg-149; that span reads SPNGTIR. Lys-155 carries the N6-acetyllysine modification. The residue at position 166 (Lys-166) is an N6-acetyllysine; alternate. An N6-succinyllysine; alternate modification is found at Lys-166. Residue Arg-172 coordinates D-threo-isocitrate. N6-acetyllysine; alternate is present on residues Lys-180 and Lys-193. An N6-succinyllysine; alternate mark is found at Lys-180 and Lys-193. Lys-199 is subject to N6-acetyllysine. Lys-256 bears the N6-acetyllysine; alternate mark. Position 256 is an N6-succinyllysine; alternate (Lys-256). N6-acetyllysine is present on residues Lys-263, Lys-272, Lys-275, and Lys-280. Lys-282 bears the N6-acetyllysine; alternate mark. Residue Lys-282 is modified to N6-succinyllysine; alternate. Asp-291 contributes to the Mn(2+) binding site. Lys-299 contacts NADP(+). Position 314 (Asp-314) interacts with Mn(2+). Residues 349 to 354 and Asn-367 contribute to the NADP(+) site; that span reads GTVTRH. Lys-384 is subject to N6-acetyllysine; alternate. Lys-384 is modified (N6-succinyllysine; alternate). Lys-400, Lys-413, and Lys-442 each carry N6-acetyllysine.

Belongs to the isocitrate and isopropylmalate dehydrogenases family. In terms of assembly, homodimer. The cofactor is Mg(2+). Mn(2+) serves as cofactor. Post-translationally, acetylation at Lys-413 dramatically reduces catalytic activity. Deacetylated by SIRT3.

The protein localises to the mitochondrion. The catalysed reaction is D-threo-isocitrate + NADP(+) = 2-oxoglutarate + CO2 + NADPH. In terms of biological role, plays a role in intermediary metabolism and energy production. It may tightly associate or interact with the pyruvate dehydrogenase complex. The protein is Isocitrate dehydrogenase [NADP], mitochondrial (IDH2) of Homo sapiens (Human).